The following is a 333-amino-acid chain: Phenylalanine--tRNA ligase alpha subunit (333 aa).

Residue Glu-254 coordinates Mg(2+).

It belongs to the class-II aminoacyl-tRNA synthetase family. Phe-tRNA synthetase alpha subunit type 1 subfamily. As to quaternary structure, tetramer of two alpha and two beta subunits. The cofactor is Mg(2+).

The protein localises to the cytoplasm. It carries out the reaction tRNA(Phe) + L-phenylalanine + ATP = L-phenylalanyl-tRNA(Phe) + AMP + diphosphate + H(+). This chain is Phenylalanine--tRNA ligase alpha subunit, found in Xylella fastidiosa (strain M23).